The primary structure comprises 180 residues: Small ribosomal subunit protein uS4 (180 aa).

Positions 102 to 174 (RRLQTMLVRK…PARKLEQKEE (73 aa)) constitute an S4 RNA-binding domain. Positions 154 to 180 (VPFSPLANPEHPARKLEQKEETNEESA) are disordered. The span at 164 to 174 (HPARKLEQKEE) shows a compositional bias: basic and acidic residues.

It belongs to the universal ribosomal protein uS4 family. In terms of assembly, part of the 30S ribosomal subunit. Contacts protein S5. The interaction surface between S4 and S5 is involved in control of translational fidelity.

One of the primary rRNA binding proteins, it binds directly to 16S rRNA where it nucleates assembly of the body of the 30S subunit. Functionally, with S5 and S12 plays an important role in translational accuracy. The protein is Small ribosomal subunit protein uS4 of Nanoarchaeum equitans (strain Kin4-M).